The following is a 286-amino-acid chain: ATP phosphoribosyltransferase (286 aa).

Belongs to the ATP phosphoribosyltransferase family. Long subfamily. Mg(2+) is required as a cofactor.

Its subcellular location is the cytoplasm. It carries out the reaction 1-(5-phospho-beta-D-ribosyl)-ATP + diphosphate = 5-phospho-alpha-D-ribose 1-diphosphate + ATP. The protein operates within amino-acid biosynthesis; L-histidine biosynthesis; L-histidine from 5-phospho-alpha-D-ribose 1-diphosphate: step 1/9. With respect to regulation, feedback inhibited by histidine. Its function is as follows. Catalyzes the condensation of ATP and 5-phosphoribose 1-diphosphate to form N'-(5'-phosphoribosyl)-ATP (PR-ATP). Has a crucial role in the pathway because the rate of histidine biosynthesis seems to be controlled primarily by regulation of HisG enzymatic activity. This is ATP phosphoribosyltransferase from Arthrobacter sp. (strain FB24).